The sequence spans 163 residues: Ankyrin repeat domain-containing protein 37 (163 aa).

ANK repeat units lie at residues 29–58, 62–91, and 95–124; these read LGQS…DVNQ, FGEA…RIDM, and DGHT…TQDT. The short motif at 129 to 149 is the Nuclear localization signal element; that stretch reads QSSLHNLKETAAGVKRGQCCQ.

The protein resides in the nucleus. The protein localises to the cytoplasm. The chain is Ankyrin repeat domain-containing protein 37 (ankrd37) from Xenopus tropicalis (Western clawed frog).